We begin with the raw amino-acid sequence, 452 residues long: MKETIVAQATPIGRGGVGILRVSGPLAADVAKAVVGKALKPRFANYLPFKDEDGTTLDQGIALFFQSPNSFTGEDILELQGHGGQVVLDLLLKRILQVNGVRLARPGEFSEQAFLNDKLDLAQAEAIADLIDASSEQAARSALKSLQGEFSNKVNQLVDGVIYLRTYVEAAIDFPDEEIDFLADGKIEGHLNDIIAQLERVRSEAKQGSILREGMKVVIAGRPNAGKSSLLNALAGREAAIVTDIAGTTRDVLREHIHIDGMPLHIIDTAGLRDATDEVERIGITRAWNEIEQADRVLLMLDSSDPDSRQPEKVRSEFLAKLPSHIPVTIIRNKTDLSGENEGVTQENGFTVIRLSAQTRQGIDLLREHLKQSMGYQTGTEGGFLARRRHLDALEKAAYHLRQGHIQLTEFRAGELLAEELRMVQSHLSEITGQFTSDDLLSNIFSSFCIGK.

3 residues coordinate (6S)-5-formyl-5,6,7,8-tetrahydrofolate: Arg21, Glu78, and Lys118. Positions 214-375 (GMKVVIAGRP…LREHLKQSMG (162 aa)) constitute a TrmE-type G domain. Asn224 provides a ligand contact to K(+). GTP is bound by residues 224 to 229 (NAGKSS), 243 to 249 (TDIAGTT), and 268 to 271 (DTAG). Ser228 lines the Mg(2+) pocket. K(+) contacts are provided by Thr243, Ile245, and Thr248. Position 249 (Thr249) interacts with Mg(2+). Lys452 contributes to the (6S)-5-formyl-5,6,7,8-tetrahydrofolate binding site.

Belongs to the TRAFAC class TrmE-Era-EngA-EngB-Septin-like GTPase superfamily. TrmE GTPase family. As to quaternary structure, homodimer. Heterotetramer of two MnmE and two MnmG subunits. Requires K(+) as cofactor.

It is found in the cytoplasm. Its function is as follows. Exhibits a very high intrinsic GTPase hydrolysis rate. Involved in the addition of a carboxymethylaminomethyl (cmnm) group at the wobble position (U34) of certain tRNAs, forming tRNA-cmnm(5)s(2)U34. This chain is tRNA modification GTPase MnmE, found in Actinobacillus succinogenes (strain ATCC 55618 / DSM 22257 / CCUG 43843 / 130Z).